Reading from the N-terminus, the 127-residue chain is Large ribosomal subunit protein bL17 (127 aa).

It belongs to the bacterial ribosomal protein bL17 family. Part of the 50S ribosomal subunit. Contacts protein L32.

The sequence is that of Large ribosomal subunit protein bL17 from Lactobacillus johnsonii (strain CNCM I-12250 / La1 / NCC 533).